We begin with the raw amino-acid sequence, 112 residues long: MIAYFGKCLLLVTIMFLGVLFGMQQANHGMLSMKGYHDPSLKGAFTLTDGKDNEKEASILGETVTAKDLVEKQKELEKVETFNMFSKAGKALSDTVTNTAQSMYEWIRDMNQ.

This is an uncharacterized protein from Bacillus subtilis (strain 168).